The chain runs to 640 residues: Serine/threonine-protein kinase WNG1 (640 aa).

The N-terminal stretch at 1 to 70 (MPEQDLASGF…GVLCTVEAGA (70 aa)) is a signal peptide. 2 disordered regions span residues 100-222 (PEVT…AQPT) and 237-280 (SHPD…DASN). The segment covering 104–120 (HASSEGSPQFESSLSQQ) has biased composition (polar residues). Over residues 124–141 (RPADRGEAHNGEEPRKDA) the composition is skewed to basic and acidic residues. Low complexity predominate over residues 175–186 (QRQASSAAESLA). Residues 248–279 (FSKKQEGRRERRLAVRGDDSFARGHNRDRDAS) show a composition bias toward basic and acidic residues. The Protein kinase domain maps to 291 to 593 (WAKIAALATG…LKQVMEDPYF (303 aa)). Lys-395 contacts ATP. The Proton acceptor role is filled by Asp-486. The interval 609–640 (PFRGDFSIDDPDAGGKMYIPPSKEQDHEQENE) is disordered. Residues 631-640 (KEQDHEQENE) are compositionally biased toward basic and acidic residues.

The protein belongs to the protein kinase superfamily. STE Ser/Thr protein kinase family. WNG subfamily. Mg(2+) serves as cofactor.

Its subcellular location is the cytoplasmic granule. It is found in the secreted. The protein resides in the parasitophorous vacuole lumen. It carries out the reaction L-seryl-[protein] + ATP = O-phospho-L-seryl-[protein] + ADP + H(+). The catalysed reaction is L-threonyl-[protein] + ATP = O-phospho-L-threonyl-[protein] + ADP + H(+). Functionally, serine/threonine-protein kinase which, at the tachyzoite stage, phosphorylates several parasitophorous vacuole (PV)-resident proteins such as GRA2, GRA6 and GRA7. By phosphorylating GRA2 and GRA6, regulates the formation of a functional intravacuolar network (IVN); IVN is composed of membranous tubules that bud from the PV membrane into the vacuolar lumen. Plays a role in the establishement of chronic infection in the host by controlling cyst formation in the host tissues. The chain is Serine/threonine-protein kinase WNG1 from Toxoplasma gondii.